A 1080-amino-acid chain; its full sequence is Kinesin-like protein KIN-14E (1080 aa).

Residues 1 to 35 form a disordered region; it reads MDFSWTTGWEKAAADDDEAESAPAPAPPAPSPQEA. The stretch at 247-355 forms a coiled coil; that stretch reads QTRTSKLISK…KQEQTLLSLE (109 aa). The Kinesin motor domain occupies 407–729; the sequence is NIRVFCRCRP…LNFASRVRRI (323 aa). 490 to 497 is an ATP binding site; the sequence is GQTGTGKT. A coiled-coil region spans residues 736–893; that stretch reads KQVDTAELQK…EHHRSVAESK (158 aa). A compositionally biased stretch (basic and acidic residues) spans 960 to 970; sequence AMSEKEQHILR. The disordered stretch occupies residues 960–1080; that stretch reads AMSEKEQHIL…AVNKTRGWVR (121 aa). The span at 971–985 shows a compositional bias: polar residues; it reads SSDSMNKKVTNNSSI. The span at 1047–1059 shows a compositional bias: low complexity; it reads TATSKTAAATHKT.

Belongs to the TRAFAC class myosin-kinesin ATPase superfamily. Kinesin family. KIN-14 subfamily.

The protein is Kinesin-like protein KIN-14E of Oryza sativa subsp. japonica (Rice).